A 119-amino-acid chain; its full sequence is Protein TusC (119 aa).

Belongs to the DsrF/TusC family. Heterohexamer, formed by a dimer of trimers. The hexameric TusBCD complex contains 2 copies each of TusB, TusC and TusD. The TusBCD complex interacts with TusE.

It localises to the cytoplasm. Its function is as follows. Part of a sulfur-relay system required for 2-thiolation of 5-methylaminomethyl-2-thiouridine (mnm(5)s(2)U) at tRNA wobble positions. The polypeptide is Protein TusC (Serratia proteamaculans (strain 568)).